Here is a 474-residue protein sequence, read N- to C-terminus: Probable cytosol aminopeptidase (474 aa).

Residues lysine 237 and aspartate 242 each contribute to the Mn(2+) site. Lysine 249 is an active-site residue. Residues aspartate 260, aspartate 319, and glutamate 321 each contribute to the Mn(2+) site. Arginine 323 is an active-site residue.

Belongs to the peptidase M17 family. The cofactor is Mn(2+).

The protein localises to the cytoplasm. The catalysed reaction is Release of an N-terminal amino acid, Xaa-|-Yaa-, in which Xaa is preferably Leu, but may be other amino acids including Pro although not Arg or Lys, and Yaa may be Pro. Amino acid amides and methyl esters are also readily hydrolyzed, but rates on arylamides are exceedingly low.. It catalyses the reaction Release of an N-terminal amino acid, preferentially leucine, but not glutamic or aspartic acids.. Its function is as follows. Presumably involved in the processing and regular turnover of intracellular proteins. Catalyzes the removal of unsubstituted N-terminal amino acids from various peptides. The sequence is that of Probable cytosol aminopeptidase from Helicobacter hepaticus (strain ATCC 51449 / 3B1).